The following is a 739-amino-acid chain: Eukaryotic translation initiation factor 3 subunit B (739 aa).

Residues 1–98 (MSINEEDYLQ…LFIQFKSTES (98 aa)) form a sufficient for interaction with HCR1 and TIF32 region. Residues 1–224 (MSINEEDYLQ…GIQSWGGANF (224 aa)) are sufficient for interaction with PIC8. The 88-residue stretch at 37–124 (NYIIVDGAPI…HRLLVNKLSD (88 aa)) folds into the RRM domain. WD repeat units lie at residues 190–229 (PRKG…SIKR), 231–293 (FHQQ…RTFA), 301–339 (QKEM…QLLD), 343–385 (VKVD…QTAR), 453–502 (ELKD…KGGV), 537–579 (IENK…ETNK), and 592–630 (DKFS…YEFT).

It belongs to the eIF-3 subunit B family. Component of the eukaryotic translation initiation factor 3 (eIF-3) complex.

The protein resides in the cytoplasm. Its function is as follows. RNA-binding component of the eukaryotic translation initiation factor 3 (eIF-3) complex, which is involved in protein synthesis of a specialized repertoire of mRNAs and, together with other initiation factors, stimulates binding of mRNA and methionyl-tRNAi to the 40S ribosome. The eIF-3 complex specifically targets and initiates translation of a subset of mRNAs involved in cell proliferation. The protein is Eukaryotic translation initiation factor 3 subunit B of Candida albicans (strain SC5314 / ATCC MYA-2876) (Yeast).